Consider the following 143-residue polypeptide: MKPSFRRKARACALQVLYSWEISHNNIKESAIYFLKEKNKKNIDIVYFYELIIGITYDCKNIDNLMKPYLFRSLKELGHIERAILRISFYELHKRNDIPYKVSINEGIELAKLFGSEDSHKFINGVLDKAVFKMGYNKKVVIA.

The protein belongs to the NusB family.

Involved in transcription antitermination. Required for transcription of ribosomal RNA (rRNA) genes. Binds specifically to the boxA antiterminator sequence of the ribosomal RNA (rrn) operons. The sequence is that of Transcription antitermination protein NusB from Buchnera aphidicola subsp. Acyrthosiphon pisum (strain APS) (Acyrthosiphon pisum symbiotic bacterium).